We begin with the raw amino-acid sequence, 166 residues long: Bud site selection protein 20 (166 aa).

Residues 7 to 16 (KRYKTKRRTR) carry the Nuclear localization signal motif. The nuclear export signal-like (NES-like) stretch occupies residues 17 to 31 (DLDLIYNDLSTKESV). The segment at 49–73 (HYCIHCAKYMETAIALKTHLKGKVH) adopts a C2H2-type zinc-finger fold.

The protein belongs to the ZNF593/BUD20 C2H2-type zinc-finger protein family. In terms of assembly, associates with pre-60S ribosomal particles; released from the pre-60S particle very early in the cytoplasm.

Its subcellular location is the nucleus. The protein resides in the cytoplasm. Functionally, involved in pre-60S ribosomal particles maturation by promoting the nuclear export of the 60S ribosome. Involved in positioning the proximal bud pole signal. This chain is Bud site selection protein 20, found in Saccharomyces cerevisiae (strain ATCC 204508 / S288c) (Baker's yeast).